Consider the following 206-residue polypeptide: 3-isopropylmalate dehydratase small subunit (206 aa).

The protein belongs to the LeuD family. LeuD type 1 subfamily. As to quaternary structure, heterodimer of LeuC and LeuD.

The catalysed reaction is (2R,3S)-3-isopropylmalate = (2S)-2-isopropylmalate. It functions in the pathway amino-acid biosynthesis; L-leucine biosynthesis; L-leucine from 3-methyl-2-oxobutanoate: step 2/4. In terms of biological role, catalyzes the isomerization between 2-isopropylmalate and 3-isopropylmalate, via the formation of 2-isopropylmaleate. The chain is 3-isopropylmalate dehydratase small subunit from Leptospira interrogans serogroup Icterohaemorrhagiae serovar copenhageni (strain Fiocruz L1-130).